The primary structure comprises 519 residues: Cell division cycle protein 20 homolog B (519 aa).

Positions 77–106 (WQLSPARDPESSSSVEEGPPSHTPESLASG) are disordered. The segment covering 87–96 (SSSSVEEGPP) has biased composition (low complexity). WD repeat units lie at residues 229–266 (RNDY…WIEN), 271–310 (VCCH…QLRN), 353–392 (YHKE…GVQG), 399–441 (PQST…NIQT), 443–484 (STQS…RSGG), and 487–519 (GHRD…WKCC).

Belongs to the WD repeat CDC20/Fizzy family. In terms of tissue distribution, expressed in multiciliated cells (MCCs).

The protein localises to the cytoplasm. Its function is as follows. Protein regulator of centriole-deuterosome disengagement and subsequently participates in the ciliogenesis in multiciliated cells (MCCs). This chain is Cell division cycle protein 20 homolog B, found in Mus musculus (Mouse).